A 663-amino-acid chain; its full sequence is Probable serine/threonine-protein kinase DDB_G0283301 (663 aa).

A Protein kinase domain is found at 312-586 (IERRNELGRG…EECVERLITL (275 aa)). ATP-binding positions include 318-326 (LGRGGNGTV) and K348. Residue D440 is the Proton acceptor of the active site.

Belongs to the protein kinase superfamily. Ser/Thr protein kinase family.

It carries out the reaction L-seryl-[protein] + ATP = O-phospho-L-seryl-[protein] + ADP + H(+). The catalysed reaction is L-threonyl-[protein] + ATP = O-phospho-L-threonyl-[protein] + ADP + H(+). The polypeptide is Probable serine/threonine-protein kinase DDB_G0283301 (Dictyostelium discoideum (Social amoeba)).